The primary structure comprises 431 residues: Adenylosuccinate synthetase (431 aa).

GTP contacts are provided by residues 12–18 (GDEGKGK) and 40–42 (GHT). Asp13 functions as the Proton acceptor in the catalytic mechanism. Mg(2+) contacts are provided by Asp13 and Gly40. IMP is bound by residues 13 to 16 (DEGK), 38 to 41 (NAGH), Thr130, Arg144, Gln225, Thr240, and Arg304. The active-site Proton donor is the His41. 300–306 (ATTGRPR) is a substrate binding site. Residues Arg306, 332-334 (KLD), and 414-416 (SVG) each bind GTP.

The protein belongs to the adenylosuccinate synthetase family. In terms of assembly, homodimer. Mg(2+) is required as a cofactor.

The protein resides in the cytoplasm. The catalysed reaction is IMP + L-aspartate + GTP = N(6)-(1,2-dicarboxyethyl)-AMP + GDP + phosphate + 2 H(+). It functions in the pathway purine metabolism; AMP biosynthesis via de novo pathway; AMP from IMP: step 1/2. In terms of biological role, plays an important role in the de novo pathway of purine nucleotide biosynthesis. Catalyzes the first committed step in the biosynthesis of AMP from IMP. This Anaeromyxobacter sp. (strain Fw109-5) protein is Adenylosuccinate synthetase.